Consider the following 478-residue polypeptide: Light-independent protochlorophyllide reductase subunit N (478 aa).

Positions 22, 47, and 107 each coordinate [4Fe-4S] cluster.

It belongs to the BchN/ChlN family. Protochlorophyllide reductase is composed of three subunits; ChlL, ChlN and ChlB. Forms a heterotetramer of two ChlB and two ChlN subunits. It depends on [4Fe-4S] cluster as a cofactor.

It is found in the plastid. The protein localises to the chloroplast. It carries out the reaction chlorophyllide a + oxidized 2[4Fe-4S]-[ferredoxin] + 2 ADP + 2 phosphate = protochlorophyllide a + reduced 2[4Fe-4S]-[ferredoxin] + 2 ATP + 2 H2O. The protein operates within porphyrin-containing compound metabolism; chlorophyll biosynthesis (light-independent). Functionally, component of the dark-operative protochlorophyllide reductase (DPOR) that uses Mg-ATP and reduced ferredoxin to reduce ring D of protochlorophyllide (Pchlide) to form chlorophyllide a (Chlide). This reaction is light-independent. The NB-protein (ChlN-ChlB) is the catalytic component of the complex. The polypeptide is Light-independent protochlorophyllide reductase subunit N (Chlorokybus atmophyticus (Soil alga)).